Consider the following 173-residue polypeptide: uncharacterized protein (173 aa).

An N-acetyltransferase domain is found at 4 to 173 (VKIVQVSEKD…TDFLLKKALV (170 aa)). Residues 97–99 (IYL), 106–110 (RGLGK), and 136–138 (NEN) each bind acetyl-CoA.

This is an uncharacterized protein from Lactobacillus delbrueckii subsp. lactis.